The following is a 393-amino-acid chain: uncharacterized protein (393 aa).

The protein belongs to the Gfo/Idh/MocA family.

This is an uncharacterized protein from Bacillus subtilis (strain 168).